Consider the following 451-residue polypeptide: Tubulin alpha chain (451 aa).

Residue Gln-11 coordinates GTP. Position 40 is an N6-acetyllysine (Lys-40). GTP-binding residues include Glu-71, Gly-144, Thr-145, Thr-179, Asn-206, and Asn-228. Glu-71 is a binding site for Mg(2+). The active site involves Glu-254. The disordered stretch occupies residues 432–451 (YEEVGAESAEGDDEDEGEDY).

Belongs to the tubulin family. Dimer of alpha and beta chains. A typical microtubule is a hollow water-filled tube with an outer diameter of 25 nm and an inner diameter of 15 nM. Alpha-beta heterodimers associate head-to-tail to form protofilaments running lengthwise along the microtubule wall with the beta-tubulin subunit facing the microtubule plus end conferring a structural polarity. Microtubules usually have 13 protofilaments but different protofilament numbers can be found in some organisms and specialized cells. The cofactor is Mg(2+). In terms of processing, undergoes a tyrosination/detyrosination cycle, the cyclic removal and re-addition of a C-terminal tyrosine residue by the enzymes tubulin tyrosine carboxypeptidase (TTCP) and tubulin tyrosine ligase (TTL), respectively. Acetylation of alpha chains at Lys-40 stabilizes microtubules and affects affinity and processivity of microtubule motors. This modification has a role in multiple cellular functions, ranging from cell motility, cell cycle progression or cell differentiation to intracellular trafficking and signaling.

It localises to the cytoplasm. Its subcellular location is the cytoskeleton. It carries out the reaction GTP + H2O = GDP + phosphate + H(+). Functionally, tubulin is the major constituent of microtubules, a cylinder consisting of laterally associated linear protofilaments composed of alpha- and beta-tubulin heterodimers. Microtubules grow by the addition of GTP-tubulin dimers to the microtubule end, where a stabilizing cap forms. Below the cap, tubulin dimers are in GDP-bound state, owing to GTPase activity of alpha-tubulin. The polypeptide is Tubulin alpha chain (TBA) (Daucus carota (Wild carrot)).